Here is a 712-residue protein sequence, read N- to C-terminus: Cadherin-13 (712 aa).

Positions 1–22 (MQHKTQLTLSFLLSQVLLLACA) are cleaved as a signal peptide. The propeptide occupies 23–138 (EDLECTPGFQ…GNLGIPRQKR (116 aa)). N86 carries an N-linked (GlcNAc...) asparagine glycan. Cadherin domains are found at residues 143–245 (TPIL…RPMF), 246–363 (KEGP…PPEF), 364–477 (TKKE…GPVF), 478–585 (HPNP…VPSL), and 586–680 (YPTL…LQVC). 5 N-linked (GlcNAc...) asparagine glycosylation sites follow: N382, N500, N530, N638, and N671. A lipid anchor (GPI-anchor amidated aspartate) is attached at D693. The propeptide at 694–712 (ALHISMTLILLSLFSLFCL) is removed in mature form.

As to quaternary structure, by contrast to classical cadherins, homodimerization in trans is not mediated by cadherin EC1 domain strand-swapping, but instead through a homophilic adhesive interface which joins two elongated EC1-EC2 domains through a region near their Ca2+-binding sites to form a tetrahedral, X-like shape. As to expression, neural tissues. Also found in muscles; kidney and retina.

It is found in the cell membrane. It localises to the cytoplasm. In terms of biological role, cadherins are calcium-dependent cell adhesion proteins. They preferentially interact with themselves in a homophilic manner in connecting cells; cadherins may thus contribute to the sorting of heterogeneous cell types. May act as a negative regulator of neural cell growth. The protein is Cadherin-13 (CDH13) of Gallus gallus (Chicken).